Reading from the N-terminus, the 147-residue chain is Probable disulfide formation protein (147 aa).

The chain crosses the membrane as a helical span at residues 9-28 (NYSLYFAWLTALIATLGSLY). A disulfide bridge links cysteine 38 with cysteine 41. A run of 2 helical transmembrane segments spans residues 43–62 (YQRV…AYRT) and 69–86 (YALP…YQYL). Cysteines 99 and 106 form a disulfide. The chain crosses the membrane as a helical span at residues 115–138 (GFITLPFLGMLATLIMSFFLIMAF).

The protein belongs to the DsbB family. BdbC subfamily.

It localises to the cell inner membrane. Required for disulfide bond formation in some proteins. In Coxiella burnetii (strain CbuG_Q212) (Coxiella burnetii (strain Q212)), this protein is Probable disulfide formation protein.